The chain runs to 514 residues: Cytochrome P450 monooxygenase MO6277 (514 aa).

The helical transmembrane segment at 6–26 threads the bilayer; the sequence is LTVLALLGGTLLLYCSGLVIY. Residue cysteine 457 participates in heme binding.

Belongs to the cytochrome P450 family. The cofactor is heme.

The protein localises to the membrane. The catalysed reaction is polyporic acid + reduced [NADPH--hemoprotein reductase] + O2 = ascocorynin + oxidized [NADPH--hemoprotein reductase] + H2O + H(+). It participates in secondary metabolite biosynthesis. Functionally, cytochrome P450 monooxygenase that hydroxylates polyporic acid produced by the nonribosomal peptide synthetase acyN to produce the less toxic metabolite ascocorynin. The hydrophobic substrate polyporic acid might approach the active site from the membrane and, after hydroxylation into ascocorynin, leaves into the cytoplasm. MO6277 appears vital to avoid high-level accumulation of polyporic acid in the fungal membrane. This chain is Cytochrome P450 monooxygenase MO6277, found in Ascocoryne sarcoides (Purple jellydisc fungus).